Consider the following 347-residue polypeptide: CDK2-associated and cullin domain-containing protein 1 (347 aa).

The span at 1–11 shows a compositional bias: acidic residues; that stretch reads MEESMEEEEML. Disordered regions lie at residues 1 to 63 and 320 to 347; these read MEES…LPGG and RGDQ…RGYR. Residues 34–49 are compositionally biased toward pro residues; that stretch reads QPPPAPPLPPPPPPRP.

The protein belongs to the cullin family. Interacts with CDK2.

Cell cycle associated protein capable of promoting cell proliferation through the activation of CDK2 at the G1/S phase transition. The chain is CDK2-associated and cullin domain-containing protein 1 (Cacul1) from Rattus norvegicus (Rat).